Consider the following 263-residue polypeptide: N-acyl homoserine lactonase AttM (263 aa).

Zn(2+) contacts are provided by His-103, His-105, Asp-107, His-108, His-180, Asp-202, and His-247.

The protein belongs to the metallo-beta-lactamase superfamily. Requires Zn(2+) as cofactor.

It catalyses the reaction an N-acyl-L-homoserine lactone + H2O = an N-acyl-L-homoserine + H(+). The chain is N-acyl homoserine lactonase AttM from Rhizobium johnstonii (strain DSM 114642 / LMG 32736 / 3841) (Rhizobium leguminosarum bv. viciae).